The primary structure comprises 264 residues: Protein GrpE (264 aa).

The segment covering 36-49 (KVQSKKVSSDHSSS) has biased composition (basic and acidic residues). The tract at residues 36 to 59 (KVQSKKVSSDHSSSEDNASSDINS) is disordered. Low complexity predominate over residues 50 to 59 (EDNASSDINS).

The protein belongs to the GrpE family. As to quaternary structure, homodimer.

The protein localises to the cytoplasm. Functionally, participates actively in the response to hyperosmotic and heat shock by preventing the aggregation of stress-denatured proteins, in association with DnaK and GrpE. It is the nucleotide exchange factor for DnaK and may function as a thermosensor. Unfolded proteins bind initially to DnaJ; upon interaction with the DnaJ-bound protein, DnaK hydrolyzes its bound ATP, resulting in the formation of a stable complex. GrpE releases ADP from DnaK; ATP binding to DnaK triggers the release of the substrate protein, thus completing the reaction cycle. Several rounds of ATP-dependent interactions between DnaJ, DnaK and GrpE are required for fully efficient folding. The sequence is that of Protein GrpE from Peanut witches'-broom phytoplasma.